The chain runs to 364 residues: Fructose-bisphosphate aldolase C-A (364 aa).

Substrate is bound by residues Arg-56 and Lys-147. Glu-188 functions as the Proton acceptor in the catalytic mechanism. The Schiff-base intermediate with dihydroxyacetone-P role is filled by Lys-230.

It belongs to the class I fructose-bisphosphate aldolase family. Homotetramer. As to expression, expressed specifically in Purkinje cells in the brain.

The catalysed reaction is beta-D-fructose 1,6-bisphosphate = D-glyceraldehyde 3-phosphate + dihydroxyacetone phosphate. The protein operates within carbohydrate degradation; glycolysis; D-glyceraldehyde 3-phosphate and glycerone phosphate from D-glucose: step 4/4. This chain is Fructose-bisphosphate aldolase C-A, found in Danio rerio (Zebrafish).